A 230-amino-acid chain; its full sequence is RNA-binding riboflavin kinase RibR (230 aa).

The protein belongs to the RibR family.

It carries out the reaction riboflavin + ATP = FMN + ADP + H(+). Functionally, may be directly involved in the regulation of the rib genes. C-terminal part of RibR specifically binds to RFN of the rib leader of the riboflavin biosynthetic operon. The RFN element is a sequence within the rib-leader mRNA reported to serve as a receptor for an FMN-dependent riboswitch. Possibly, RibR produces the comodulator FMN through its own N-terminal flavokinase activity. FMN-activated RibR may stabilize the anti-anti terminator structure of RFN mRNA, causing transcription termination of the rib genes in trans. The polypeptide is RNA-binding riboflavin kinase RibR (ribR) (Bacillus subtilis (strain 168)).